A 407-amino-acid polypeptide reads, in one-letter code: Peptidase T (407 aa).

H81 serves as a coordination point for Zn(2+). The active site involves D83. D142 is a binding site for Zn(2+). E176 (proton acceptor) is an active-site residue. Zn(2+) contacts are provided by E177, D199, and H381.

Belongs to the peptidase M20B family. Zn(2+) serves as cofactor.

Its subcellular location is the cytoplasm. It catalyses the reaction Release of the N-terminal residue from a tripeptide.. In terms of biological role, cleaves the N-terminal amino acid of tripeptides. This is Peptidase T from Streptococcus pneumoniae (strain Taiwan19F-14).